Reading from the N-terminus, the 196-residue chain is SPRY domain-containing protein 7 (196 aa).

Ala2 bears the N-acetylalanine mark. The region spanning Ala2–Pro184 is the B30.2/SPRY domain.

The sequence is that of SPRY domain-containing protein 7 (SPRYD7) from Homo sapiens (Human).